The chain runs to 519 residues: Putative cytochrome P450 CYP13A10 (519 aa).

The helical transmembrane segment at 3-23 (VILLAIPTLFIGFISYYLWIW) threads the bilayer. Cys-465 serves as a coordination point for heme.

The protein belongs to the cytochrome P450 family. The cofactor is heme.

It localises to the membrane. Functionally, cytochromes P450 are a group of heme-thiolate monooxygenases. They oxidize a variety of structurally unrelated compounds, including steroids, fatty acids, and xenobiotics. This chain is Putative cytochrome P450 CYP13A10 (cyp-13A10), found in Caenorhabditis elegans.